Consider the following 214-residue polypeptide: Peroxiredoxin 2 (214 aa).

Residues 1–157 (MKLYQKFPET…LLRITKAMIV (157 aa)) enclose the Thioredoxin domain. Catalysis depends on C45, which acts as the Cysteine sulfenic acid (-SOH) intermediate. R120 is a binding site for substrate.

It belongs to the peroxiredoxin family. Prx6 subfamily. As to quaternary structure, homodecamer. Pentamer of dimers that assemble into a ring structure.

It is found in the cytoplasm. It catalyses the reaction a hydroperoxide + [thioredoxin]-dithiol = an alcohol + [thioredoxin]-disulfide + H2O. Thiol-specific peroxidase that catalyzes the reduction of hydrogen peroxide and organic hydroperoxides to water and alcohols, respectively. Plays a role in cell protection against oxidative stress by detoxifying peroxides. This chain is Peroxiredoxin 2, found in Sulfuracidifex metallicus (Sulfolobus metallicus).